The sequence spans 79 residues: Cyclin-dependent kinases regulatory subunit 1 (79 aa).

The residue at position 2 (Ser2) is an N-acetylserine.

This sequence belongs to the CKS family. Forms a homohexamer that can probably bind six kinase subunits.

In terms of biological role, binds to the catalytic subunit of the cyclin dependent kinases and is essential for their biological function. In Bos taurus (Bovine), this protein is Cyclin-dependent kinases regulatory subunit 1 (CKS1B).